A 72-amino-acid polypeptide reads, in one-letter code: Large ribosomal subunit protein bL31c (72 aa).

The protein belongs to the bacterial ribosomal protein bL31 family. Type A subfamily. Part of the 50S ribosomal subunit.

The protein resides in the plastid. The protein localises to the chloroplast. Functionally, binds the 23S rRNA. This is Large ribosomal subunit protein bL31c from Trieres chinensis (Marine centric diatom).